The primary structure comprises 94 residues: Acylphosphatase (94 aa).

The 87-residue stretch at 8–94 (HIRAWVSGKV…ETPPLGFEVC (87 aa)) folds into the Acylphosphatase-like domain. Catalysis depends on residues R23 and N41.

It belongs to the acylphosphatase family.

The enzyme catalyses an acyl phosphate + H2O = a carboxylate + phosphate + H(+). The polypeptide is Acylphosphatase (acyP) (Hahella chejuensis (strain KCTC 2396)).